The primary structure comprises 311 residues: Homoserine kinase (311 aa).

Residue 88 to 98 (PEGLGLGSSGA) participates in ATP binding.

This sequence belongs to the GHMP kinase family. Homoserine kinase subfamily.

Its subcellular location is the cytoplasm. It catalyses the reaction L-homoserine + ATP = O-phospho-L-homoserine + ADP + H(+). The protein operates within amino-acid biosynthesis; L-threonine biosynthesis; L-threonine from L-aspartate: step 4/5. Its function is as follows. Catalyzes the ATP-dependent phosphorylation of L-homoserine to L-homoserine phosphate. The polypeptide is Homoserine kinase (Saccharolobus islandicus (strain L.S.2.15 / Lassen #1) (Sulfolobus islandicus)).